Here is a 507-residue protein sequence, read N- to C-terminus: Maturase K (507 aa).

This sequence belongs to the intron maturase 2 family. MatK subfamily.

It localises to the plastid. The protein resides in the chloroplast. Its function is as follows. Usually encoded in the trnK tRNA gene intron. Probably assists in splicing its own and other chloroplast group II introns. The chain is Maturase K from Ranunculus macranthus (Large buttercup).